The following is a 107-amino-acid chain: Phosphoribosyl-ATP pyrophosphatase (107 aa).

Belongs to the PRA-PH family.

It is found in the cytoplasm. It catalyses the reaction 1-(5-phospho-beta-D-ribosyl)-ATP + H2O = 1-(5-phospho-beta-D-ribosyl)-5'-AMP + diphosphate + H(+). It participates in amino-acid biosynthesis; L-histidine biosynthesis; L-histidine from 5-phospho-alpha-D-ribose 1-diphosphate: step 2/9. The polypeptide is Phosphoribosyl-ATP pyrophosphatase (Bacillus cytotoxicus (strain DSM 22905 / CIP 110041 / 391-98 / NVH 391-98)).